The following is a 176-amino-acid chain: Small ribosomal subunit protein uS8c (176 aa).

It belongs to the universal ribosomal protein uS8 family. Part of the 30S ribosomal subunit.

Its subcellular location is the plastid. The protein resides in the chloroplast. Its function is as follows. One of the primary rRNA binding proteins, it binds directly to 16S rRNA central domain where it helps coordinate assembly of the platform of the 30S subunit. This chain is Small ribosomal subunit protein uS8c (rps8), found in Stigeoclonium helveticum (Green alga).